The primary structure comprises 220 residues: Large ribosomal subunit protein uL16 (220 aa).

This sequence belongs to the universal ribosomal protein uL16 family. As to quaternary structure, component of the small ribosomal subunit. Mature ribosomes consist of a small (40S) and a large (60S) subunit. The 40S subunit contains about 33 different proteins and 1 molecule of RNA (18S). The 60S subunit contains about 49 different proteins and 3 molecules of RNA (25S, 5.8S and 5S).

The polypeptide is Large ribosomal subunit protein uL16 (RPL10) (Vitis riparia (Frost grape)).